Here is a 1383-residue protein sequence, read N- to C-terminus: DNA-directed RNA polymerase subunit beta (1383 aa).

This sequence belongs to the RNA polymerase beta chain family. The RNAP catalytic core consists of 2 alpha, 1 beta, 1 beta' and 1 omega subunit. When a sigma factor is associated with the core the holoenzyme is formed, which can initiate transcription.

It catalyses the reaction RNA(n) + a ribonucleoside 5'-triphosphate = RNA(n+1) + diphosphate. Functionally, DNA-dependent RNA polymerase catalyzes the transcription of DNA into RNA using the four ribonucleoside triphosphates as substrates. The protein is DNA-directed RNA polymerase subunit beta of Bartonella quintana (strain Toulouse) (Rochalimaea quintana).